The chain runs to 217 residues: ATP-dependent Clp protease proteolytic subunit (217 aa).

Serine 119 (nucleophile) is an active-site residue. Residue histidine 144 is part of the active site.

The protein belongs to the peptidase S14 family. Fourteen ClpP subunits assemble into 2 heptameric rings which stack back to back to give a disk-like structure with a central cavity, resembling the structure of eukaryotic proteasomes.

It is found in the cytoplasm. It catalyses the reaction Hydrolysis of proteins to small peptides in the presence of ATP and magnesium. alpha-casein is the usual test substrate. In the absence of ATP, only oligopeptides shorter than five residues are hydrolyzed (such as succinyl-Leu-Tyr-|-NHMec, and Leu-Tyr-Leu-|-Tyr-Trp, in which cleavage of the -Tyr-|-Leu- and -Tyr-|-Trp bonds also occurs).. Its function is as follows. Cleaves peptides in various proteins in a process that requires ATP hydrolysis. Has a chymotrypsin-like activity. Plays a major role in the degradation of misfolded proteins. This is ATP-dependent Clp protease proteolytic subunit from Bordetella bronchiseptica (strain ATCC BAA-588 / NCTC 13252 / RB50) (Alcaligenes bronchisepticus).